Here is a 186-residue protein sequence, read N- to C-terminus: Ribosome-recycling factor (186 aa).

Belongs to the RRF family.

The protein localises to the cytoplasm. Functionally, responsible for the release of ribosomes from messenger RNA at the termination of protein biosynthesis. May increase the efficiency of translation by recycling ribosomes from one round of translation to another. The chain is Ribosome-recycling factor from Pediococcus pentosaceus (strain ATCC 25745 / CCUG 21536 / LMG 10740 / 183-1w).